We begin with the raw amino-acid sequence, 231 residues long: Ribose-5-phosphate isomerase A (231 aa).

Substrate is bound by residues 32–35, 85–88, and 98–101; these read TGST, DGAD, and KGGG. The active-site Proton acceptor is the glutamate 107. Lysine 125 contacts substrate.

This sequence belongs to the ribose 5-phosphate isomerase family. As to quaternary structure, homodimer.

It catalyses the reaction aldehydo-D-ribose 5-phosphate = D-ribulose 5-phosphate. The protein operates within carbohydrate degradation; pentose phosphate pathway; D-ribose 5-phosphate from D-ribulose 5-phosphate (non-oxidative stage): step 1/1. Catalyzes the reversible conversion of ribose-5-phosphate to ribulose 5-phosphate. The sequence is that of Ribose-5-phosphate isomerase A from Burkholderia mallei (strain NCTC 10247).